Consider the following 354-residue polypeptide: MLKKLEVLEDTYKDLSEKIGDPDVINDQKVWQKYIKEHADLEPIVMKYREYKSVLDSIKESKEILQEESDEELRELAKMELAEMEEKVAPLEEEIKILLLPKDPNDDKNVIVEIRGGAGGDEAALFAGDLFRMYSRYAERRRWKIELLSASDTGVGGYKEVSFMIKGKGAYSRLKYESGVHRVQRIPSTESGGRIHTSTSTVAVLPEVEDVEVEINPNDLRIDVFRSSGNGGQSVNTTDSAVRVTHIPTGEVVSCQDGKSQLKNKEQALKILKARLYDKALAEQHKDIAAERKSQVGTGDRSERIRTYNFPQGRISDHRINLTLYKLDAFLDGDIDEMIDALITVDQTEKMTAI.

N5-methylglutamine is present on glutamine 233.

It belongs to the prokaryotic/mitochondrial release factor family. In terms of processing, methylated by PrmC. Methylation increases the termination efficiency of RF1.

The protein resides in the cytoplasm. In terms of biological role, peptide chain release factor 1 directs the termination of translation in response to the peptide chain termination codons UAG and UAA. The polypeptide is Peptide chain release factor 1 (Clostridioides difficile (strain 630) (Peptoclostridium difficile)).